We begin with the raw amino-acid sequence, 112 residues long: UPF0212 protein Mhun_0078 (112 aa).

Belongs to the UPF0212 family.

The sequence is that of UPF0212 protein Mhun_0078 from Methanospirillum hungatei JF-1 (strain ATCC 27890 / DSM 864 / NBRC 100397 / JF-1).